Here is a 536-residue protein sequence, read N- to C-terminus: 1,4-beta-D-glucan cellobiohydrolase B (536 aa).

Positions 1–21 (MSSFQIYRAALLLSILATANA) are cleaved as a signal peptide. A catalytic region spans residues 22 to 458 (QQVGTYTTET…SNIKFGPIGS (437 aa)). Catalysis depends on E233, which acts as the Nucleophile. Residue E238 is the Proton donor of the active site. N-linked (GlcNAc...) asparagine glycans are attached at residues N351 and N414. The tract at residues 459 to 500 (TYSSGSSSGSGSSSSSSSTTTKATSTTLKTTSTTSSGSSSTS) is ser/Thr-rich linker. The disordered stretch occupies residues 464–499 (SSSGSGSSSSSSSTTTKATSTTLKTTSTTSSGSSST). In terms of domain architecture, CBM1 spans 500-536 (SAAQAYGQCGGQGWTGPTTCVSGYTCTYENAYYSQCL). 2 disulfide bridges follow: C508–C525 and C519–C535.

It belongs to the glycosyl hydrolase 7 (cellulase C) family.

The protein localises to the secreted. It carries out the reaction Hydrolysis of (1-&gt;4)-beta-D-glucosidic linkages in cellulose and cellotetraose, releasing cellobiose from the non-reducing ends of the chains.. Its function is as follows. The biological conversion of cellulose to glucose generally requires three types of hydrolytic enzymes: (1) Endoglucanases which cut internal beta-1,4-glucosidic bonds; (2) Exocellobiohydrolases that cut the disaccharide cellobiose from the non-reducing end of the cellulose polymer chain; (3) Beta-1,4-glucosidases which hydrolyze the cellobiose and other short cello-oligosaccharides to glucose. The polypeptide is 1,4-beta-D-glucan cellobiohydrolase B (cbhB) (Aspergillus niger).